Here is a 359-residue protein sequence, read N- to C-terminus: Decorin (359 aa).

The signal sequence occupies residues 1–16 (MKATIILLLLAQVSWA). Residues 17-30 (GPFQQRGLFDFMLE) constitute a propeptide that is removed on maturation. O-linked (Xyl...) (glycosaminoglycan) serine glycosylation is present at Ser-34. 2 disulfides stabilise this stretch: Cys-54–Cys-60 and Cys-58–Cys-67. LRR repeat units follow at residues 73–93 (DKVP…NNKI), 94–117 (TEIK…NNKI), 118–141 (SKVS…KNQL), 142–162 (KELP…ENEI), 163–186 (TKVR…TNPL), 187–212 (KSSG…DTNI), 213–233 (TSIP…GNKI), 234–257 (SRVD…FNSI), 258–281 (SAVD…NNKL), 282–304 (TRVP…NNNI), 305–334 (SVVG…SNPV), and 335–359 (QYWE…GNYK). The N-linked (GlcNAc...) asparagine glycan is linked to Asn-211. N-linked (GlcNAc...) asparagine glycosylation is found at Asn-262 and Asn-303. Cysteines 313 and 346 form a disulfide.

Belongs to the small leucine-rich proteoglycan (SLRP) family. SLRP class I subfamily. In terms of assembly, binds to type I and type II collagen, fibronectin and TGF-beta. Forms a ternary complex with MFAP2 and ELN. Interacts with DPT. Post-translationally, the attached glycosaminoglycan chain can be either chondroitin sulfate or dermatan sulfate depending upon the tissue of origin. Detected in placenta (at protein level). Detected in cerebrospinal fluid, fibroblasts and urine (at protein level).

It localises to the secreted. The protein localises to the extracellular space. Its subcellular location is the extracellular matrix. In terms of biological role, may affect the rate of fibrils formation. This is Decorin (DCN) from Homo sapiens (Human).